Reading from the N-terminus, the 241-residue chain is Microneme antigen (241 aa).

The signal sequence occupies residues 1-34; sequence MRLPIRFPKYVLYGMASAVWSILFLHILVGDTMS. Residues 35–103 constitute a propeptide that is removed on maturation; that stretch reads AADALSWSGG…ATGRGPSFVH (69 aa). A compositionally biased stretch (basic and acidic residues) spans 61-83; the sequence is HEMGKELEQQHGAEEQQMQRDTK. The segment at 61–92 is disordered; it reads HEMGKELEQQHGAEEQQMQRDTKPAAFSNPPH. PAN domains follow at residues 112-181 and 185-241; these read CFPH…PRSC and CTDN…FNKS. Disulfide bonds link C112–C181, C137–C159, C141–C147, C185–C189, C210–C230, and C214–C220. S121 lines the a carbohydrate pocket. A carbohydrate-binding residues include K162, Y169, and D174.

Belongs to the microneme antigen family. In terms of assembly, homodimer or heterodimer of major microneme antigen and microneme antigen. Post-translationally, contains six disulfide bonds.

Its subcellular location is the cytoplasmic vesicle. It is found in the secretory vesicle. It localises to the microneme. Galactose-binding lectin. Plays a role in adhesion to the host cell. Has a potential role in invasion of host cells. In Sarcocystis muris, this protein is Microneme antigen.